The primary structure comprises 219 residues: Small ribosomal subunit protein uS3 (219 aa).

Residues 38–106 (IRKFIEKRLV…RVHINIVEIK (69 aa)) enclose the KH type-2 domain.

This sequence belongs to the universal ribosomal protein uS3 family. Part of the 30S ribosomal subunit. Forms a tight complex with proteins S10 and S14.

Its function is as follows. Binds the lower part of the 30S subunit head. Binds mRNA in the 70S ribosome, positioning it for translation. The polypeptide is Small ribosomal subunit protein uS3 (Levilactobacillus brevis (strain ATCC 367 / BCRC 12310 / CIP 105137 / JCM 1170 / LMG 11437 / NCIMB 947 / NCTC 947) (Lactobacillus brevis)).